The sequence spans 390 residues: Large ribosomal subunit protein uL3y (390 aa).

The disordered stretch occupies residues 1 to 36; that stretch reads MSHRKFEHPRHGSLGFLPRKRASRHRGKVKAFPKDD. Residues 18–31 show a composition bias toward basic residues; it reads PRKRASRHRGKVKA.

The protein belongs to the universal ribosomal protein uL3 family.

The protein localises to the cytoplasm. This chain is Large ribosomal subunit protein uL3y (ARP2), found in Arabidopsis thaliana (Mouse-ear cress).